The sequence spans 384 residues: Methylthioribose-1-phosphate isomerase (384 aa).

Asp-255 functions as the Proton donor in the catalytic mechanism.

This sequence belongs to the eIF-2B alpha/beta/delta subunits family. MtnA subfamily.

It is found in the cytoplasm. It localises to the nucleus. The enzyme catalyses 5-(methylsulfanyl)-alpha-D-ribose 1-phosphate = 5-(methylsulfanyl)-D-ribulose 1-phosphate. The protein operates within amino-acid biosynthesis; L-methionine biosynthesis via salvage pathway; L-methionine from S-methyl-5-thio-alpha-D-ribose 1-phosphate: step 1/6. In terms of biological role, catalyzes the interconversion of methylthioribose-1-phosphate (MTR-1-P) into methylthioribulose-1-phosphate (MTRu-1-P). The protein is Methylthioribose-1-phosphate isomerase (mri1) of Talaromyces stipitatus (strain ATCC 10500 / CBS 375.48 / QM 6759 / NRRL 1006) (Penicillium stipitatum).